Consider the following 467-residue polypeptide: Acetyl-CoA decarbonylase/synthase complex subunit beta (467 aa).

[Ni-Fe-S] cluster is bound by residues Cys-193, Cys-196, Cys-282, and Cys-284. The tract at residues 403–428 is disordered; that stretch reads RWAEEEEEEEEKAPEEEAPAEEPTME. The span at 405–426 shows a compositional bias: acidic residues; the sequence is AEEEEEEEEKAPEEEAPAEEPT.

Belongs to the CdhC family. As to quaternary structure, monomer. The ACDS complex is made up of alpha, epsilon, beta, gamma and delta chains with a probable stoichiometry of (alpha(2)epsilon(2))(4)-beta(8)-(gamma(1)delta(1))(8). The cofactor is [Ni-Fe-S] cluster.

It catalyses the reaction Co(I)-[corrinoid Fe-S protein] + acetyl-CoA + H(+) = methyl-Co(III)-[corrinoid Fe-S protein] + CO + CoA. Part of a complex that catalyzes the reversible cleavage of acetyl-CoA, allowing autotrophic growth from CO(2). The alpha-epsilon complex generates CO from CO(2), while the beta subunit (this protein) combines the CO with CoA and a methyl group to form acetyl-CoA. The methyl group, which is incorporated into acetyl-CoA, is transferred to the beta subunit by a corrinoid iron-sulfur protein (the gamma-delta complex). The protein is Acetyl-CoA decarbonylase/synthase complex subunit beta of Methanopyrus kandleri (strain AV19 / DSM 6324 / JCM 9639 / NBRC 100938).